The following is a 297-amino-acid chain: Glutamyl-Q tRNA(Asp) synthetase (297 aa).

L-glutamate is bound by residues 9–13 (RFAPS) and Glu45. The 'HIGH' region signature appears at 12 to 22 (PSPTGPLHFGS). Cys101, Cys103, and Cys118 together coordinate Zn(2+). Residues Tyr170 and Arg188 each coordinate L-glutamate. The 'KMSKS' region signature appears at 226–230 (KLSKS). Lys229 is an ATP binding site.

Belongs to the class-I aminoacyl-tRNA synthetase family. GluQ subfamily. It depends on Zn(2+) as a cofactor.

In terms of biological role, catalyzes the tRNA-independent activation of glutamate in presence of ATP and the subsequent transfer of glutamate onto a tRNA(Asp). Glutamate is transferred on the 2-amino-5-(4,5-dihydroxy-2-cyclopenten-1-yl) moiety of the queuosine in the wobble position of the QUC anticodon. The chain is Glutamyl-Q tRNA(Asp) synthetase from Xanthomonas campestris pv. campestris (strain 8004).